A 363-amino-acid chain; its full sequence is UDP-N-acetylglucosamine--N-acetylmuramyl-(pentapeptide) pyrophosphoryl-undecaprenol N-acetylglucosamine transferase (363 aa).

Residues 10–12 (TGG), N124, S195, I249, and Q294 contribute to the UDP-N-acetyl-alpha-D-glucosamine site.

The protein belongs to the glycosyltransferase 28 family. MurG subfamily.

It localises to the cell membrane. The catalysed reaction is Mur2Ac(oyl-L-Ala-gamma-D-Glu-L-Lys-D-Ala-D-Ala)-di-trans,octa-cis-undecaprenyl diphosphate + UDP-N-acetyl-alpha-D-glucosamine = beta-D-GlcNAc-(1-&gt;4)-Mur2Ac(oyl-L-Ala-gamma-D-Glu-L-Lys-D-Ala-D-Ala)-di-trans,octa-cis-undecaprenyl diphosphate + UDP + H(+). Its pathway is cell wall biogenesis; peptidoglycan biosynthesis. Functionally, cell wall formation. Catalyzes the transfer of a GlcNAc subunit on undecaprenyl-pyrophosphoryl-MurNAc-pentapeptide (lipid intermediate I) to form undecaprenyl-pyrophosphoryl-MurNAc-(pentapeptide)GlcNAc (lipid intermediate II). In Leuconostoc mesenteroides subsp. mesenteroides (strain ATCC 8293 / DSM 20343 / BCRC 11652 / CCM 1803 / JCM 6124 / NCDO 523 / NBRC 100496 / NCIMB 8023 / NCTC 12954 / NRRL B-1118 / 37Y), this protein is UDP-N-acetylglucosamine--N-acetylmuramyl-(pentapeptide) pyrophosphoryl-undecaprenol N-acetylglucosamine transferase.